A 227-amino-acid chain; its full sequence is Zinc finger protein 511 (227 aa).

3 C2H2-type zinc fingers span residues 80–105 (FTCQ…HMMH), 107–130 (NTCS…LEWH), and 144–169 (YQCL…VRLH). Residues 180-204 (PKTNRGPAMPAAADAATRAPTDDSD) are disordered. A compositionally biased stretch (low complexity) spans 186–198 (PAMPAAADAATRA).

Belongs to the krueppel C2H2-type zinc-finger protein family.

The protein localises to the nucleus. In terms of biological role, may be involved in transcriptional regulation. The protein is Zinc finger protein 511 (Znf511) of Mus musculus (Mouse).